Here is a 126-residue protein sequence, read N- to C-terminus: UPF0102 protein P9303_16141 (126 aa).

Belongs to the UPF0102 family.

The protein is UPF0102 protein P9303_16141 of Prochlorococcus marinus (strain MIT 9303).